A 237-amino-acid polypeptide reads, in one-letter code: MQQSKEERVHRVFEKISDHYDRMNSVISFKRHVAWRKDTMKRMNVQKGTKALDVCCGTADWTIALAEAVGPSGEVYGLDFSRNMLKVGEEKVKERGFQHVTLVHGNAMSLPFPDNTFDYVTIGFGLRNVPDYMTVLKEMYRVAKPGGKVVCLETSQPTLIGFRQLYYAYFRYIMPFFGKIFAKSYEEYSWLQESAREFPGMDELADMFRQAGFVNVQVKPYTFGVAAMHLGHKPDGR.

S-adenosyl-L-methionine-binding positions include Thr58, Asp79, and 106–107; that span reads NA.

The protein belongs to the class I-like SAM-binding methyltransferase superfamily. MenG/UbiE family.

It catalyses the reaction a 2-demethylmenaquinol + S-adenosyl-L-methionine = a menaquinol + S-adenosyl-L-homocysteine + H(+). The protein operates within quinol/quinone metabolism; menaquinone biosynthesis; menaquinol from 1,4-dihydroxy-2-naphthoate: step 2/2. Its function is as follows. Methyltransferase required for the conversion of demethylmenaquinol (DMKH2) to menaquinol (MKH2). This Anoxybacillus flavithermus (strain DSM 21510 / WK1) protein is Demethylmenaquinone methyltransferase.